The sequence spans 245 residues: Terpene cyclase ausL (245 aa).

7 consecutive transmembrane segments (helical) span residues 17 to 37, 51 to 71, 76 to 96, 113 to 133, 138 to 158, 170 to 190, and 206 to 226; these read ILAISEVLKVVAAVGWSVNYI, IGILPLCCDIGWEFVYAWMFP, HWQGVVRVWFFLHSAVLLVTL, IVFIYIFVTIVFGAGQYALAA, ALGFHWGGALCQFLSSSGGIA, SYLIWFARAISTFAGFIKLCI, and MCWFYIVTVLSFDAAYPFLYF.

Belongs to the paxB family.

It is found in the membrane. Its pathway is secondary metabolite biosynthesis; terpenoid biosynthesis. Functionally, terpene cyclase; part of the gene cluster A that mediates the biosynthesis of the fungal meroterpenoid acetoxydehydroaustin. The first step of the pathway is the synthesis of 3,5-dimethylorsellinic acid by the polyketide synthase ausA. 3,5-dimethylorsellinic acid is then prenylated by the polyprenyl transferase ausN. Further epoxidation by the FAD-dependent monooxygenase ausM and cyclization by the probable terpene cyclase ausL lead to the formation of protoaustinoid A. Protoaustinoid A is then oxidized to spiro-lactone preaustinoid A3 by the combined action of the FAD-binding monooxygenases ausB and ausC, and the dioxygenase ausE. Acid-catalyzed keto-rearrangement and ring contraction of the tetraketide portion of preaustinoid A3 by ausJ lead to the formation of preaustinoid A4. The aldo-keto reductase ausK, with the help of ausH, is involved in the next step by transforming preaustinoid A4 into isoaustinone which is in turn hydroxylated by the P450 monooxygenase ausI to form austinolide. The cytochrome P450 monooxygenase ausG then modifies austinolide to austinol. Austinol is further acetylated to austin by the O-acetyltransferase ausP, which spontaneously changes to dehydroaustin. The cytochrome P450 monooxygenase then converts dehydroaustin is into 7-dehydrodehydroaustin. The hydroxylation catalyzed by ausR permits the second O-acetyltransferase ausQ to add an additional acetyl group to the molecule, leading to the formation of acetoxydehydroaustin. Due to genetic rearrangements of the clusters and the subsequent loss of some enzymes, the end product of the Penicillium brasilianum austinoid biosynthesis clusters is acetoxydehydroaustin. The sequence is that of Terpene cyclase ausL from Penicillium brasilianum.